The sequence spans 84 residues: Large ribosomal subunit protein bL27 (84 aa).

The tract at residues 1–20 is disordered; that stretch reads MAHKKGGGSTKNGRDSNPKY.

Belongs to the bacterial ribosomal protein bL27 family.

The chain is Large ribosomal subunit protein bL27 from Chlorobaculum tepidum (strain ATCC 49652 / DSM 12025 / NBRC 103806 / TLS) (Chlorobium tepidum).